We begin with the raw amino-acid sequence, 120 residues long: NAD(P)H-quinone oxidoreductase subunit 3, chloroplastic (120 aa).

3 helical membrane passes run Phe-10 to Val-30, Met-64 to Met-84, and Val-88 to Leu-108.

It belongs to the complex I subunit 3 family. NDH is composed of at least 16 different subunits, 5 of which are encoded in the nucleus.

It localises to the plastid. It is found in the chloroplast thylakoid membrane. It catalyses the reaction a plastoquinone + NADH + (n+1) H(+)(in) = a plastoquinol + NAD(+) + n H(+)(out). The catalysed reaction is a plastoquinone + NADPH + (n+1) H(+)(in) = a plastoquinol + NADP(+) + n H(+)(out). NDH shuttles electrons from NAD(P)H:plastoquinone, via FMN and iron-sulfur (Fe-S) centers, to quinones in the photosynthetic chain and possibly in a chloroplast respiratory chain. The immediate electron acceptor for the enzyme in this species is believed to be plastoquinone. Couples the redox reaction to proton translocation, and thus conserves the redox energy in a proton gradient. This is NAD(P)H-quinone oxidoreductase subunit 3, chloroplastic from Ipomoea purpurea (Common morning glory).